The sequence spans 422 residues: Probable tRNA pseudouridine synthase D 2 (422 aa).

The Nucleophile role is filled by D89. The TRUD domain maps to 160-371 (GAPNYFDSQR…IYSERKILSI (212 aa)).

This sequence belongs to the pseudouridine synthase TruD family.

The catalysed reaction is uridine(13) in tRNA = pseudouridine(13) in tRNA. In terms of biological role, could be responsible for synthesis of pseudouridine from uracil-13 in transfer RNAs. In Methanocaldococcus jannaschii (strain ATCC 43067 / DSM 2661 / JAL-1 / JCM 10045 / NBRC 100440) (Methanococcus jannaschii), this protein is Probable tRNA pseudouridine synthase D 2.